We begin with the raw amino-acid sequence, 130 residues long: Small ribosomal subunit protein uS9 (130 aa).

The protein belongs to the universal ribosomal protein uS9 family.

The polypeptide is Small ribosomal subunit protein uS9 (Citrobacter koseri (strain ATCC BAA-895 / CDC 4225-83 / SGSC4696)).